Reading from the N-terminus, the 100-residue chain is Small ribosomal subunit protein uS14c (100 aa).

It belongs to the universal ribosomal protein uS14 family. In terms of assembly, part of the 30S ribosomal subunit.

It localises to the plastid. It is found in the chloroplast. In terms of biological role, binds 16S rRNA, required for the assembly of 30S particles. The sequence is that of Small ribosomal subunit protein uS14c from Arabis hirsuta (Hairy rock-cress).